Here is a 96-residue protein sequence, read N- to C-terminus: ATP synthase subunit c (96 aa).

A run of 2 helical transmembrane segments spans residues 9–29 and 58–78; these read FIAC…GCGI and IGLA…LILI.

The protein belongs to the ATPase C chain family. As to quaternary structure, F-type ATPases have 2 components, F(1) - the catalytic core - and F(0) - the membrane proton channel. F(1) has five subunits: alpha(3), beta(3), gamma(1), delta(1), epsilon(1). F(0) has three main subunits: a(1), b(2) and c(10-14). The alpha and beta chains form an alternating ring which encloses part of the gamma chain. F(1) is attached to F(0) by a central stalk formed by the gamma and epsilon chains, while a peripheral stalk is formed by the delta and b chains.

The protein localises to the cell inner membrane. Its function is as follows. F(1)F(0) ATP synthase produces ATP from ADP in the presence of a proton or sodium gradient. F-type ATPases consist of two structural domains, F(1) containing the extramembraneous catalytic core and F(0) containing the membrane proton channel, linked together by a central stalk and a peripheral stalk. During catalysis, ATP synthesis in the catalytic domain of F(1) is coupled via a rotary mechanism of the central stalk subunits to proton translocation. In terms of biological role, key component of the F(0) channel; it plays a direct role in translocation across the membrane. A homomeric c-ring of between 10-14 subunits forms the central stalk rotor element with the F(1) delta and epsilon subunits. In Desulfosudis oleivorans (strain DSM 6200 / JCM 39069 / Hxd3) (Desulfococcus oleovorans), this protein is ATP synthase subunit c.